Here is a 1826-residue protein sequence, read N- to C-terminus: Kinesin-like protein KIF13B (1826 aa).

The Kinesin motor domain occupies 5–353 (KVKVAVRIRP…LRYADRAKHI (349 aa)). 103 to 110 (GQTGSGKS) is a binding site for ATP. Residues 364–439 (NARIIRDLRE…ESLGISLQSS (76 aa)) are a coiled coil. Residues 471-535 (TLIGSANSQD…LHHGDRILWG (65 aa)) enclose the FHA domain. Positions 546–582 (KKKKKAEREDEDQDPSMKNENSSEQLDVDGDSSSEVS) are disordered. A compositionally biased stretch (polar residues) spans 561 to 570 (SMKNENSSEQ). Coiled coils occupy residues 607-710 (MQSI…LDKR), 752-772 (SLEKLDNRLLDMRDLYQEWKE), and 1096-1143 (LNAL…ERNA). Residue S661 is modified to Phosphoserine. Residues 1367-1420 (EQLTGKGKLSRRSISSPNVNRLSGSRQDLIPSYSLGSNKGRWESQQDVSQTTVS) are disordered. 2 stretches are compositionally biased toward polar residues: residues 1378–1392 (RSISSPNVNRLSGSR) and 1409–1420 (ESQQDVSQTTVS). A Phosphoserine modification is found at S1379. S1381 is subject to Phosphoserine; by MARK2. Residues S1382 and S1391 each carry the phosphoserine modification. Phosphoserine; by MARK2 is present on S1410. S1432, S1438, and S1537 each carry phosphoserine. Phosphothreonine is present on T1545. S1559 carries the phosphoserine modification. Over residues 1579 to 1607 (SDALGPGLDAAAPPGSMPTAPEAEPEAPI) the composition is skewed to low complexity. Disordered regions lie at residues 1579-1650 (SDAL…RVRR) and 1662-1698 (MLAGDPGCSPGAEGNAPAPGAGGQALASDSEEADEVP). The segment covering 1608 to 1624 (SHPPPPTAVPAEEPPGP) has biased composition (pro residues). S1644 is subject to Phosphoserine. Over residues 1671 to 1688 (PGAEGNAPAPGAGGQALA) the composition is skewed to low complexity. The 43-residue stretch at 1721–1763 (GPADFQEGTWVGVELDLPSGKNDGSIGGKQYFRCNPGYGLLVR) folds into the CAP-Gly domain. At S1797 the chain carries Phosphoserine.

This sequence belongs to the TRAFAC class myosin-kinesin ATPase superfamily. Kinesin family. In terms of assembly, binds to DLG1 and DLG4. Interacts (when phosphorylated at Ser-1381 and Ser-1410) with 14-3-3. Phosphorylated at Ser-1381 and Ser-1410 by MARK2, promoting interaction with 14-3-3 and inhibiting microtubule-dependent accumulation and formation of axons. In terms of tissue distribution, ubiquitous.

Its subcellular location is the cytoplasm. It localises to the cytoskeleton. The protein localises to the cell projection. The protein resides in the axon. Its function is as follows. Involved in reorganization of the cortical cytoskeleton. Regulates axon formation by promoting the formation of extra axons. May be functionally important for the intracellular trafficking of MAGUKs and associated protein complexes. This chain is Kinesin-like protein KIF13B (KIF13B), found in Homo sapiens (Human).